The chain runs to 661 residues: mRNA 3'-end-processing protein RNA14 (661 aa).

The interval 1 to 29 is disordered; that stretch reads MSDGTATPDPLPSSSNTSTSLRPTSRVRD. The span at 12–24 shows a compositional bias: low complexity; sequence PSSSNTSTSLRPT. 6 HAT repeats span residues 62 to 94, 99 to 133, 143 to 179, 190 to 223, 264 to 296, and 305 to 337; these read KQWKQVYETFDKLHDRFPLMANIWCMRLSLEFD, LDAAVIEPVLARCLSKELGNNDLSLWLSYITYVRK, EARNIVIQAFQVVVDKCAIFEPKSIQFWNEYLHFLEH, QRVQYIRKLYKTLLCQPMDCLESMWQRYTQWEQD, TLNQATESNLPKPNEYDVQQLLIWLEWIRWESD, and LHKARMTYVYMQAAQHVCFAPEIWFNMANYQGE.

It is found in the nucleus. The protein resides in the cytoplasm. Its function is as follows. Component of the cleavage factor IA (CFIA) complex, which is involved in the endonucleolytic cleavage during polyadenylation-dependent pre-mRNA 3'-end formation. The chain is mRNA 3'-end-processing protein RNA14 (RNA14) from Kluyveromyces lactis (strain ATCC 8585 / CBS 2359 / DSM 70799 / NBRC 1267 / NRRL Y-1140 / WM37) (Yeast).